A 336-amino-acid chain; its full sequence is SKRKAPQESLNEGITDFLVELANYERNVNRAIHKYNAYRKAASVIAKYPQKIKSGTEAKKLDGVGAKIAEKIDEFLTTGKLRKLEKIRNDDTSSSINFLTRVTGIGPAAARKFFDEGVRNLEDLKKIEHKLNHHQQIGLKYFEEFEKRIPRSEMQKMEALILKELDIVDPEYIGTICGSYRRGAESSGDIDILLTHPDFTSQSEKQPKLLHAVVDHLESIGFITDTLSKGDTKFMGVCQLQKEKEEEEEESLHRRIDIRLIPKDQYYCGVLYFTGSDIFNKNMRTHALEKGFTLNEYTIRPLGVTGVAGEPLLVDSEKDIFEYIQWKYREPKDRSE.

Residues Lys59, Leu61, and Val64 each contribute to the K(+) site. Lys59, Leu61, and Val64 together coordinate Na(+). Residue Lys71 is the Nucleophile; Schiff-base intermediate with DNA; for 5'-dRP lyase activity of the active site. Position 82 is an omega-N-methylarginine; by PRMT6 (Arg82). Positions 100, 102, and 105 each coordinate K(+). Thr100, Val102, and Ile105 together coordinate Na(+). Residue Arg148 coordinates a 2'-deoxyribonucleoside 5'-triphosphate. Arg151 is modified (omega-N-methylarginine; by PRMT6). A 2'-deoxyribonucleoside 5'-triphosphate contacts are provided by Ser179, Arg182, Gly188, and Asp189. Residues 182–191 (RGAESSGDID) form a DNA-binding region. 3 residues coordinate Mg(2+): Asp189, Asp191, and Asp257.

It belongs to the DNA polymerase type-X family. Mg(2+) serves as cofactor. Post-translationally, methylation by PRMT6 stimulates the polymerase activity by enhancing DNA binding and processivity. Ubiquitinated: monoubiquitinated by huwe1/arf-bp1. Monoubiquitinated protein is then the target of stub1/chip, which catalyzes polyubiquitination from monoubiquitin, leading to degradation by the proteasome. usp47 mediates the deubiquitination of monoubiquitinated protein, preventing polyubiquitination by STUB1/CHIP and its subsequent degradation.

The protein resides in the nucleus. It is found in the cytoplasm. The catalysed reaction is DNA(n) + a 2'-deoxyribonucleoside 5'-triphosphate = DNA(n+1) + diphosphate. It carries out the reaction a 5'-end 2'-deoxyribose-2'-deoxyribonucleotide-DNA = (2E,4S)-4-hydroxypenten-2-al-5-phosphate + a 5'-end 5'-phospho-2'-deoxyribonucleoside-DNA + H(+). It catalyses the reaction 2'-deoxyribonucleotide-(2'-deoxyribose 5'-phosphate)-2'-deoxyribonucleotide-DNA = a 3'-end 2'-deoxyribonucleotide-(2,3-dehydro-2,3-deoxyribose 5'-phosphate)-DNA + a 5'-end 5'-phospho-2'-deoxyribonucleoside-DNA + H(+). In terms of biological role, repair polymerase that plays a key role in base-excision repair. During this process, the damaged base is excised by specific DNA glycosylases, the DNA backbone is nicked at the abasic site by an apurinic/apyrimidic (AP) endonuclease, and POLB removes 5'-deoxyribose-phosphate from the preincised AP site acting as a 5'-deoxyribose-phosphate lyase (5'-dRP lyase); through its DNA polymerase activity, it adds one nucleotide to the 3' end of the arising single-nucleotide gap. Conducts 'gap-filling' DNA synthesis in a stepwise distributive fashion rather than in a processive fashion as for other DNA polymerases. It is also able to cleave sugar-phosphate bonds 3' to an intact AP site, acting as an AP lyase. The sequence is that of DNA polymerase beta (polb) from Danio rerio (Zebrafish).